We begin with the raw amino-acid sequence, 431 residues long: Gamma-glutamyl phosphate reductase (431 aa).

This sequence belongs to the gamma-glutamyl phosphate reductase family.

It localises to the cytoplasm. The catalysed reaction is L-glutamate 5-semialdehyde + phosphate + NADP(+) = L-glutamyl 5-phosphate + NADPH + H(+). Its pathway is amino-acid biosynthesis; L-proline biosynthesis; L-glutamate 5-semialdehyde from L-glutamate: step 2/2. Catalyzes the NADPH-dependent reduction of L-glutamate 5-phosphate into L-glutamate 5-semialdehyde and phosphate. The product spontaneously undergoes cyclization to form 1-pyrroline-5-carboxylate. In Beijerinckia indica subsp. indica (strain ATCC 9039 / DSM 1715 / NCIMB 8712), this protein is Gamma-glutamyl phosphate reductase.